Reading from the N-terminus, the 338-residue chain is Lipoate-protein ligase A (338 aa).

Positions 29–216 constitute a BPL/LPL catalytic domain; it reads PATQRVLFLW…AFFAHYGERV (188 aa). ATP contacts are provided by residues R71, 76 to 79, and K134; that span reads GAVF. K134 is a binding site for (R)-lipoate.

Belongs to the LplA family. In terms of assembly, monomer.

Its subcellular location is the cytoplasm. It catalyses the reaction L-lysyl-[lipoyl-carrier protein] + (R)-lipoate + ATP = N(6)-[(R)-lipoyl]-L-lysyl-[lipoyl-carrier protein] + AMP + diphosphate + H(+). Its pathway is protein modification; protein lipoylation via exogenous pathway; protein N(6)-(lipoyl)lysine from lipoate: step 1/2. It functions in the pathway protein modification; protein lipoylation via exogenous pathway; protein N(6)-(lipoyl)lysine from lipoate: step 2/2. Functionally, catalyzes both the ATP-dependent activation of exogenously supplied lipoate to lipoyl-AMP and the transfer of the activated lipoyl onto the lipoyl domains of lipoate-dependent enzymes. The sequence is that of Lipoate-protein ligase A from Escherichia coli O6:K15:H31 (strain 536 / UPEC).